Here is a 62-residue protein sequence, read N- to C-terminus: Large ribosomal subunit protein bL28 (62 aa).

This sequence belongs to the bacterial ribosomal protein bL28 family.

This chain is Large ribosomal subunit protein bL28, found in Streptococcus uberis (strain ATCC BAA-854 / 0140J).